The chain runs to 840 residues: Phosphatidylinositol-glycan-specific phospholipase D (840 aa).

The N-terminal stretch at 1 to 23 (MSAFRLWPGLLIMLGSLCHRGSP) is a signal peptide. Residues Asn-94, Asn-271, Asn-292, Asn-307, and Asn-321 are each glycosylated (N-linked (GlcNAc...) asparagine). 7 FG-GAP repeats span residues 367–428 (SPLA…GLPP), 436–497 (EAHR…GGMS), 499–559 (SPNI…LSDK), 563–623 (NVEA…SLGR), 633–693 (QSWF…GATR), 704–770 (LLLS…TLGD), and 788–840 (QYVL…LGSD). 5 N-linked (GlcNAc...) asparagine glycosylation sites follow: Asn-501, Asn-568, Asn-591, Asn-604, and Asn-659.

This sequence belongs to the GPLD1 family. Monomer.

It is found in the secreted. The enzyme catalyses a 6-(alpha-D-glucosaminyl)-1-(1,2-diacyl-sn-glycero-3-phospho)-1D-myo-inositol + H2O = 6-(alpha-D-glucosaminyl)-1D-myo-inositol + a 1,2-diacyl-sn-glycero-3-phosphate + H(+). Its function is as follows. This protein hydrolyzes the inositol phosphate linkage in proteins anchored by phosphatidylinositol glycans (GPI-anchor) thus releasing these proteins from the membrane. The sequence is that of Phosphatidylinositol-glycan-specific phospholipase D (GPLD1) from Homo sapiens (Human).